We begin with the raw amino-acid sequence, 401 residues long: Argininosuccinate synthase (401 aa).

8-16 (AYSGGLDTS) provides a ligand contact to ATP. Tyr-85 contributes to the L-citrulline binding site. Gly-115 contacts ATP. L-aspartate contacts are provided by Thr-117, Asn-121, and Asp-122. Asn-121 is a binding site for L-citrulline. Positions 125, 173, 258, and 270 each coordinate L-citrulline.

Belongs to the argininosuccinate synthase family. Type 1 subfamily. As to quaternary structure, homotetramer.

The protein localises to the cytoplasm. It carries out the reaction L-citrulline + L-aspartate + ATP = 2-(N(omega)-L-arginino)succinate + AMP + diphosphate + H(+). It participates in amino-acid biosynthesis; L-arginine biosynthesis; L-arginine from L-ornithine and carbamoyl phosphate: step 2/3. The polypeptide is Argininosuccinate synthase (Staphylococcus epidermidis (strain ATCC 35984 / DSM 28319 / BCRC 17069 / CCUG 31568 / BM 3577 / RP62A)).